Here is a 257-residue protein sequence, read N- to C-terminus: tRNA (guanine-N(1)-)-methyltransferase (257 aa).

S-adenosyl-L-methionine is bound by residues G112 and 136–141 (LGDYVL).

Belongs to the RNA methyltransferase TrmD family. In terms of assembly, homodimer.

The protein resides in the cytoplasm. The catalysed reaction is guanosine(37) in tRNA + S-adenosyl-L-methionine = N(1)-methylguanosine(37) in tRNA + S-adenosyl-L-homocysteine + H(+). Functionally, specifically methylates guanosine-37 in various tRNAs. This Salinispora arenicola (strain CNS-205) protein is tRNA (guanine-N(1)-)-methyltransferase.